Here is a 289-residue protein sequence, read N- to C-terminus: ATP synthase gamma chain (289 aa).

It belongs to the ATPase gamma chain family. As to quaternary structure, F-type ATPases have 2 components, CF(1) - the catalytic core - and CF(0) - the membrane proton channel. CF(1) has five subunits: alpha(3), beta(3), gamma(1), delta(1), epsilon(1). CF(0) has three main subunits: a, b and c.

It is found in the cell inner membrane. Its function is as follows. Produces ATP from ADP in the presence of a proton gradient across the membrane. The gamma chain is believed to be important in regulating ATPase activity and the flow of protons through the CF(0) complex. This chain is ATP synthase gamma chain, found in Halorhodospira halophila (strain DSM 244 / SL1) (Ectothiorhodospira halophila (strain DSM 244 / SL1)).